A 362-amino-acid polypeptide reads, in one-letter code: Microfibril-associated glycoprotein 3 (362 aa).

Residues 1 to 19 form the signal peptide; that stretch reads MKLHCCLFTLVASIIVPAA. At 20-146 the chain is on the extracellular side; the sequence is FVLEDVDFNQ…TLRVIFTSGD (127 aa). Asn-36, Asn-41, and Asn-110 each carry an N-linked (GlcNAc...) asparagine glycan. An Ig-like C2-type domain is found at 45-137; the sequence is PSSFELSASS…SPIRASYSVT (93 aa). Cys-73 and Cys-124 are joined by a disulfide. Residues 147-167 form a helical membrane-spanning segment; the sequence is MSVYYMIVCLIAFTITLILNV. At 168–362 the chain is on the cytoplasmic side; that stretch reads TRLCMMSSHL…KDGAYENSQL (195 aa). Disordered regions lie at residues 282–306 and 319–362; these read GIYVINPEMGRSNSPGGDSDDGSLN and HLQS…NSQL. Residues 319–337 are compositionally biased toward polar residues; the sequence is HLQSETKSIDTESQGSSHF.

Post-translationally, glycosylated.

It localises to the cell membrane. In terms of biological role, component of the elastin-associated microfibrils. This chain is Microfibril-associated glycoprotein 3 (MFAP3), found in Pongo abelii (Sumatran orangutan).